The chain runs to 353 residues: Photosystem II protein D1 (353 aa).

At T2 the chain carries N-acetylthreonine. T2 is subject to Phosphothreonine. 3 consecutive transmembrane segments (helical) span residues 29-46 (YIGWFGVLMIPTLLTATS), 118-133 (HFLLGVACYMGREWEL), and 142-156 (WIAVAYSAPVAAATA). A chlorophyll a-binding site is contributed by H118. A pheophytin a-binding site is contributed by Y126. [CaMn4O5] cluster contacts are provided by D170 and E189. The chain crosses the membrane as a helical span at residues 197–218 (FHMLGVAGVFGGSLFSAMHGSL). H198 contributes to the chlorophyll a binding site. Residues H215 and 264-265 (SF) contribute to the a quinone site. Residue H215 participates in Fe cation binding. Position 272 (H272) interacts with Fe cation. A helical transmembrane segment spans residues 274–288 (FLAAWPVVGIWFTAL). [CaMn4O5] cluster is bound by residues H332, E333, D342, and A344. The propeptide occupies 345–353 (SVEAPSINA).

The protein belongs to the reaction center PufL/M/PsbA/D family. In terms of assembly, PSII is composed of 1 copy each of membrane proteins PsbA, PsbB, PsbC, PsbD, PsbE, PsbF, PsbH, PsbI, PsbJ, PsbK, PsbL, PsbM, PsbT, PsbX, PsbY, PsbZ, Psb30/Ycf12, at least 3 peripheral proteins of the oxygen-evolving complex and a large number of cofactors. It forms dimeric complexes. The D1/D2 heterodimer binds P680, chlorophylls that are the primary electron donor of PSII, and subsequent electron acceptors. It shares a non-heme iron and each subunit binds pheophytin, quinone, additional chlorophylls, carotenoids and lipids. D1 provides most of the ligands for the Mn4-Ca-O5 cluster of the oxygen-evolving complex (OEC). There is also a Cl(-1) ion associated with D1 and D2, which is required for oxygen evolution. The PSII complex binds additional chlorophylls, carotenoids and specific lipids. is required as a cofactor. In terms of processing, tyr-161 forms a radical intermediate that is referred to as redox-active TyrZ, YZ or Y-Z. C-terminally processed by CTPA; processing is essential to allow assembly of the oxygen-evolving complex and thus photosynthetic growth.

The protein localises to the plastid. The protein resides in the chloroplast thylakoid membrane. It carries out the reaction 2 a plastoquinone + 4 hnu + 2 H2O = 2 a plastoquinol + O2. Its function is as follows. Photosystem II (PSII) is a light-driven water:plastoquinone oxidoreductase that uses light energy to abstract electrons from H(2)O, generating O(2) and a proton gradient subsequently used for ATP formation. It consists of a core antenna complex that captures photons, and an electron transfer chain that converts photonic excitation into a charge separation. The D1/D2 (PsbA/PsbD) reaction center heterodimer binds P680, the primary electron donor of PSII as well as several subsequent electron acceptors. This is Photosystem II protein D1 from Chara vulgaris (Common stonewort).